The chain runs to 64 residues: MTTVKFKYKGEEKQVDISKIKKVWRVGKMISFTYDEGGGKTGRGAVSEKDAPKELLQMLEKQKK.

It belongs to the 7 kDa DNA-binding/endoribonuclease P2 family. In terms of assembly, monomer.

The protein resides in the cytoplasm. Its function is as follows. Can constrain negative DNA supercoils. May be involved in maintaining the integrity of the genome at high temperature. This Saccharolobus islandicus (strain L.D.8.5 / Lassen #2) (Sulfolobus islandicus) protein is DNA-binding protein 7a.